Reading from the N-terminus, the 238-residue chain is Ribosomal RNA small subunit methyltransferase G (238 aa).

S-adenosyl-L-methionine contacts are provided by residues Gly77, Phe82, 128–129 (AE), and Arg147.

This sequence belongs to the methyltransferase superfamily. RNA methyltransferase RsmG family.

Its subcellular location is the cytoplasm. Its function is as follows. Specifically methylates the N7 position of guanine in position 535 of 16S rRNA. The chain is Ribosomal RNA small subunit methyltransferase G from Listeria welshimeri serovar 6b (strain ATCC 35897 / DSM 20650 / CCUG 15529 / CIP 8149 / NCTC 11857 / SLCC 5334 / V8).